We begin with the raw amino-acid sequence, 649 residues long: 1-deoxy-D-xylulose-5-phosphate synthase 1 (649 aa).

Thiamine diphosphate-binding positions include H73 and S113–A115. Residue D144 participates in Mg(2+) binding. Thiamine diphosphate contacts are provided by residues G145–A146, N174, Y285, and E367. N174 contributes to the Mg(2+) binding site. The interval L623 to A649 is disordered.

Belongs to the transketolase family. DXPS subfamily. Homodimer. Mg(2+) is required as a cofactor. Thiamine diphosphate serves as cofactor.

The catalysed reaction is D-glyceraldehyde 3-phosphate + pyruvate + H(+) = 1-deoxy-D-xylulose 5-phosphate + CO2. It functions in the pathway metabolic intermediate biosynthesis; 1-deoxy-D-xylulose 5-phosphate biosynthesis; 1-deoxy-D-xylulose 5-phosphate from D-glyceraldehyde 3-phosphate and pyruvate: step 1/1. Its function is as follows. Catalyzes the acyloin condensation reaction between C atoms 2 and 3 of pyruvate and glyceraldehyde 3-phosphate to yield 1-deoxy-D-xylulose-5-phosphate (DXP). The sequence is that of 1-deoxy-D-xylulose-5-phosphate synthase 1 from Kitasatospora griseola (Streptomyces griseolosporeus).